Consider the following 151-residue polypeptide: uncharacterized protein (151 aa).

3 consecutive 4Fe-4S ferredoxin-type domains span residues 4-32, 33-63, and 64-93; these read KIIVLNPEKCTKCYDCINICKEIHGESRV, RKVDGIPIFCMQCENAPCKEICPVDAIYLKD, and GIPIVDKERCIACGMCAIACPIGAIFIKNR. [4Fe-4S] cluster contacts are provided by cysteine 13, cysteine 16, cysteine 19, cysteine 23, cysteine 42, cysteine 45, cysteine 50, cysteine 54, cysteine 73, cysteine 76, cysteine 79, cysteine 83, cysteine 98, cysteine 101, cysteine 111, and cysteine 115.

The cofactor is [4Fe-4S] cluster.

This is an uncharacterized protein from Methanocaldococcus jannaschii (strain ATCC 43067 / DSM 2661 / JAL-1 / JCM 10045 / NBRC 100440) (Methanococcus jannaschii).